The chain runs to 148 residues: Large ribosomal subunit protein uL15 (148 aa).

The disordered stretch occupies residues 14-54; that stretch reads HRKKRVGCGEGGGHGKTSGRGGKGQTARSGSSIRPGFEGGQ. The segment covering 21–37 has biased composition (gly residues); the sequence is CGEGGGHGKTSGRGGKG.

The protein belongs to the universal ribosomal protein uL15 family. As to quaternary structure, part of the 50S ribosomal subunit.

Binds to the 23S rRNA. This is Large ribosomal subunit protein uL15 from Opitutus terrae (strain DSM 11246 / JCM 15787 / PB90-1).